A 420-amino-acid chain; its full sequence is DNA repair protein RadA (420 aa).

Glycine 62 to serine 69 provides a ligand contact to ATP. The RadA KNRFG motif motif lies at lysine 218–glycine 222. The interval aspartate 317–alanine 420 is lon-protease-like.

It belongs to the RecA family. RadA subfamily.

Its function is as follows. Plays a role in repairing double-strand DNA breaks, probably involving stabilizing or processing branched DNA or blocked replication forks. Required for efficient transformation with chromosomal (linear) DNA, but not for replicative plasmid DNA. Its increased sensitivity to a DNA damaging agent suggests it may be required for DNA repair. This Streptococcus pneumoniae (strain ATCC BAA-255 / R6) protein is DNA repair protein RadA.